We begin with the raw amino-acid sequence, 321 residues long: Peroxidase 70 (321 aa).

The first 25 residues, 1 to 25 (MASSSFTSLSVMVLLCLAAAAVASA), serve as a signal peptide directing secretion. A Pyrrolidone carboxylic acid modification is found at Gln-26. Cystine bridges form between Cys-36/Cys-116, Cys-69/Cys-74, Cys-122/Cys-317, and Cys-201/Cys-226. His-67 functions as the Proton acceptor in the catalytic mechanism. Residues Asp-68, Val-71, Gly-73, Asp-75, and Ser-77 each coordinate Ca(2+). Residue Asn-81 is glycosylated (N-linked (GlcNAc...) asparagine). Residue Pro-164 participates in substrate binding. Asn-172 carries an N-linked (GlcNAc...) asparagine glycan. His-194 is a binding site for heme b. Thr-195 is a binding site for Ca(2+). An N-linked (GlcNAc...) asparagine glycan is attached at Asn-210. The Ca(2+) site is built by Asp-241, Thr-244, and Asp-249.

It belongs to the peroxidase family. Classical plant (class III) peroxidase subfamily. Requires heme b as cofactor. The cofactor is Ca(2+).

The protein localises to the secreted. It carries out the reaction 2 a phenolic donor + H2O2 = 2 a phenolic radical donor + 2 H2O. Functionally, removal of H(2)O(2), oxidation of toxic reductants, biosynthesis and degradation of lignin, suberization, auxin catabolism, response to environmental stresses such as wounding, pathogen attack and oxidative stress. These functions might be dependent on each isozyme/isoform in each plant tissue. In Zea mays (Maize), this protein is Peroxidase 70 (PER70).